Reading from the N-terminus, the 649-residue chain is Protein teflon (649 aa).

The C2H2-type 1 zinc-finger motif lies at 33–56 (LYCHFCRDLFTQLPEFLRHLQSNH). The tract at residues 78–126 (EQGKAHEDAQSAGHNSSSGDSSSLMNSEDSRAIEGSEDNSDNSPMKPEQ) is disordered. The span at 88-104 (SAGHNSSSGDSSSLMNS) shows a compositional bias: low complexity. 2 consecutive C2H2-type zinc fingers follow at residues 599–621 (YFCK…LISH) and 625–648 (FQCT…RNAH).

This sequence belongs to the Teflon family. As to expression, expressed at a low level in a variety of tissues, highest expression is in testis.

Its subcellular location is the nucleus. The protein localises to the chromosome. Its function is as follows. Specifically required in males for proper segregation of autosomal bivalents at meiosis I. Expression is required in the male germ line prior to spermatocyte stage S4. May have a role as a bridging molecule maintaining adhesion to hold autosome bivalents together via heterochromatic connections. The protein is Protein teflon of Drosophila melanogaster (Fruit fly).